We begin with the raw amino-acid sequence, 72 residues long: Probable protein transport protein Sec61 subunit gamma (72 aa).

Over 1 to 40 (MSQKLQKPSFLSEYLRSIRLFSKKCVRPSGKELSMSIKRH) the chain is Cytoplasmic. A helical membrane pass occupies residues 41-61 (AIGIGFLGILGYAIKLIHIPI). The Extracellular portion of the chain corresponds to 62–72 (NNIIVSSPGKE).

It belongs to the SecE/SEC61-gamma family. In terms of assembly, heterotrimeric complex composed of SEC61-alpha, SEC61-beta and SEC61-gamma.

It localises to the endoplasmic reticulum membrane. In terms of biological role, necessary for protein translocation in the endoplasmic reticulum. The sequence is that of Probable protein transport protein Sec61 subunit gamma from Encephalitozoon cuniculi (strain GB-M1) (Microsporidian parasite).